The following is a 326-amino-acid chain: ATP-dependent 6-phosphofructokinase (326 aa).

Gly-12 is a binding site for ATP. 22–26 provides a ligand contact to ADP; it reads RAIIK. ATP is bound by residues 73 to 74 and 103 to 106; these read RF and GDGS. Mg(2+) is bound at residue Asp-104. A substrate-binding site is contributed by 126–128; it reads TID. Asp-128 (proton acceptor) is an active-site residue. Arg-155 serves as a coordination point for ADP. Substrate contacts are provided by residues Arg-163 and 170-172; that span reads MGH. ADP contacts are provided by residues 186–188, Lys-212, and 215–217; these read GSE and KRS. Residues Glu-224, Lys-246, and 252 to 255 each bind substrate; that span reads HIQR.

The protein belongs to the phosphofructokinase type A (PFKA) family. ATP-dependent PFK group I subfamily. Prokaryotic clade 'B1' sub-subfamily. Homotetramer. Mg(2+) is required as a cofactor.

Its subcellular location is the cytoplasm. It carries out the reaction beta-D-fructose 6-phosphate + ATP = beta-D-fructose 1,6-bisphosphate + ADP + H(+). Its pathway is carbohydrate degradation; glycolysis; D-glyceraldehyde 3-phosphate and glycerone phosphate from D-glucose: step 3/4. Allosterically activated by ADP and other diphosphonucleosides, and allosterically inhibited by phosphoenolpyruvate. Functionally, catalyzes the phosphorylation of D-fructose 6-phosphate to fructose 1,6-bisphosphate by ATP, the first committing step of glycolysis. The protein is ATP-dependent 6-phosphofructokinase of Mycoplasmopsis pulmonis (strain UAB CTIP) (Mycoplasma pulmonis).